We begin with the raw amino-acid sequence, 277 residues long: Polyamine aminopropyltransferase (277 aa).

Residues 2 to 235 (ELWFTENQDE…SLWTFTMGSK (234 aa)) form the PABS domain. Residue glutamine 31 coordinates S-methyl-5'-thioadenosine. Residues histidine 62 and aspartate 86 each contribute to the spermidine site. S-methyl-5'-thioadenosine is bound by residues glutamate 106 and 137-138 (DG). The Proton acceptor role is filled by aspartate 155. 155-158 (DSTD) is a spermidine binding site. An S-methyl-5'-thioadenosine-binding site is contributed by proline 162.

The protein belongs to the spermidine/spermine synthase family. In terms of assembly, homodimer or homotetramer.

The protein localises to the cytoplasm. The enzyme catalyses S-adenosyl 3-(methylsulfanyl)propylamine + putrescine = S-methyl-5'-thioadenosine + spermidine + H(+). It participates in amine and polyamine biosynthesis; spermidine biosynthesis; spermidine from putrescine: step 1/1. Its function is as follows. Catalyzes the irreversible transfer of a propylamine group from the amino donor S-adenosylmethioninamine (decarboxy-AdoMet) to putrescine (1,4-diaminobutane) to yield spermidine. This is Polyamine aminopropyltransferase from Thermoanaerobacter pseudethanolicus (strain ATCC 33223 / 39E) (Clostridium thermohydrosulfuricum).